A 176-amino-acid polypeptide reads, in one-letter code: ATP-dependent protease subunit HslV (176 aa).

T2 is a catalytic residue. Residues G157, C160, and T163 each contribute to the Na(+) site.

This sequence belongs to the peptidase T1B family. HslV subfamily. As to quaternary structure, a double ring-shaped homohexamer of HslV is capped on each side by a ring-shaped HslU homohexamer. The assembly of the HslU/HslV complex is dependent on binding of ATP.

The protein resides in the cytoplasm. It catalyses the reaction ATP-dependent cleavage of peptide bonds with broad specificity.. With respect to regulation, allosterically activated by HslU binding. Protease subunit of a proteasome-like degradation complex believed to be a general protein degrading machinery. This chain is ATP-dependent protease subunit HslV, found in Salmonella agona (strain SL483).